A 239-amino-acid polypeptide reads, in one-letter code: Tetraspanin-9 (239 aa).

The Cytoplasmic portion of the chain corresponds to 1-13 (MARGCLCCLKYMM). Residues 14–34 (FLFNLIFWLCGCGLLGVGIWL) traverse the membrane as a helical segment. Residues 35 to 55 (SVSQGNFATFSPSFPSLSAAN) lie on the Extracellular side of the membrane. Residues 56 to 76 (LVIAIGTIVMVTGFLGCLGAI) form a helical membrane-spanning segment. Topologically, residues 77 to 85 (KENKCLLLS) are cytoplasmic. Residues 86–106 (FFIILLIILLAELILLILFFV) form a helical membrane-spanning segment. At 107–203 (YMDKVNENAK…VKMWFDDNKH (97 aa)) the chain is on the extracellular side. The N-linked (GlcNAc...) asparagine glycan is linked to N180. Residues 204–224 (VLGTIGMCILIIQILGMAFSM) form a helical membrane-spanning segment. Residues 225–239 (TLFQQIHRTGKKYDA) are Cytoplasmic-facing.

This sequence belongs to the tetraspanin (TM4SF) family.

It is found in the membrane. This is Tetraspanin-9 (tspan9) from Xenopus tropicalis (Western clawed frog).